The sequence spans 135 residues: Large ribosomal subunit protein uL16 (135 aa).

It belongs to the universal ribosomal protein uL16 family. As to quaternary structure, part of the 50S ribosomal subunit.

In terms of biological role, binds 23S rRNA and is also seen to make contacts with the A and possibly P site tRNAs. The polypeptide is Large ribosomal subunit protein uL16 (rplP) (Carsonella ruddii (strain PV)).